The following is a 349-amino-acid chain: ATP phosphoribosyltransferase regulatory subunit (349 aa).

A disordered region spans residues 327-349; it reads GRGRGVRPRRASARGGRARARPR. Residues 330-349 show a composition bias toward basic residues; it reads RGVRPRRASARGGRARARPR.

Belongs to the class-II aminoacyl-tRNA synthetase family. HisZ subfamily. In terms of assembly, heteromultimer composed of HisG and HisZ subunits.

The protein localises to the cytoplasm. It functions in the pathway amino-acid biosynthesis; L-histidine biosynthesis; L-histidine from 5-phospho-alpha-D-ribose 1-diphosphate: step 1/9. Its function is as follows. Required for the first step of histidine biosynthesis. May allow the feedback regulation of ATP phosphoribosyltransferase activity by histidine. The protein is ATP phosphoribosyltransferase regulatory subunit of Anaeromyxobacter dehalogenans (strain 2CP-1 / ATCC BAA-258).